Reading from the N-terminus, the 858-residue chain is Alanine--tRNA ligase (858 aa).

4 residues coordinate Zn(2+): H550, H554, C652, and H656.

The protein belongs to the class-II aminoacyl-tRNA synthetase family. Requires Zn(2+) as cofactor.

It localises to the cytoplasm. The enzyme catalyses tRNA(Ala) + L-alanine + ATP = L-alanyl-tRNA(Ala) + AMP + diphosphate. Functionally, catalyzes the attachment of alanine to tRNA(Ala) in a two-step reaction: alanine is first activated by ATP to form Ala-AMP and then transferred to the acceptor end of tRNA(Ala). Also edits incorrectly charged Ser-tRNA(Ala) and Gly-tRNA(Ala) via its editing domain. The protein is Alanine--tRNA ligase of Pseudothermotoga lettingae (strain ATCC BAA-301 / DSM 14385 / NBRC 107922 / TMO) (Thermotoga lettingae).